Reading from the N-terminus, the 233-residue chain is Mediator of RNA polymerase II transcription subunit 7 (233 aa).

A Glycyl lysine isopeptide (Lys-Gly) (interchain with G-Cter in SUMO1); alternate cross-link involves residue Lys185. Lys185 participates in a covalent cross-link: Glycyl lysine isopeptide (Lys-Gly) (interchain with G-Cter in SUMO2); alternate. The segment at 187 to 213 (EPMDADDSNNCTGQNEHQRENSGHRRD) is disordered. Ser194 bears the Phosphoserine mark. Basic and acidic residues predominate over residues 202–213 (EHQRENSGHRRD).

The protein belongs to the Mediator complex subunit 7 family. As to quaternary structure, component of the Mediator complex, which is composed of MED1, MED4, MED6, MED7, MED8, MED9, MED10, MED11, MED12, MED13, MED13L, MED14, MED15, MED16, MED17, MED18, MED19, MED20, MED21, MED22, MED23, MED24, MED25, MED26, MED27, MED29, MED30, MED31, CCNC, CDK8 and CDC2L6/CDK11. The MED12, MED13, CCNC and CDK8 subunits form a distinct module termed the CDK8 module. Mediator containing the CDK8 module is less active than Mediator lacking this module in supporting transcriptional activation. Individual preparations of the Mediator complex lacking one or more distinct subunits have been variously termed ARC, CRSP, DRIP, PC2, SMCC and TRAP. In terms of processing, constitutively sumoylated.

It localises to the nucleus. Component of the Mediator complex, a coactivator involved in the regulated transcription of nearly all RNA polymerase II-dependent genes. Mediator functions as a bridge to convey information from gene-specific regulatory proteins to the basal RNA polymerase II transcription machinery. Mediator is recruited to promoters by direct interactions with regulatory proteins and serves as a scaffold for the assembly of a functional preinitiation complex with RNA polymerase II and the general transcription factors. The polypeptide is Mediator of RNA polymerase II transcription subunit 7 (MED7) (Homo sapiens (Human)).